The following is a 380-amino-acid chain: Chaperone protein DnaJ (380 aa).

Residues 5–70 enclose the J domain; it reads DYYEVLGVER…SKRAAYDQYG (66 aa). The CR-type zinc-finger motif lies at 139-217; the sequence is GTNVNIRVPT…CHGEGRVEES (79 aa). Cysteine 152, cysteine 155, cysteine 169, cysteine 172, cysteine 191, cysteine 194, cysteine 205, and cysteine 208 together coordinate Zn(2+). 4 CXXCXGXG motif repeats span residues 152-159, 169-176, 191-198, and 205-212; these read CKPCDGSG, CPTCGGIG, CPRCHGHG, and CDSCHGEG. The interval 224–245 is disordered; it reads VPPGVDTGDRIRLSGEGEAGTQ.

Belongs to the DnaJ family. In terms of assembly, homodimer. Zn(2+) serves as cofactor.

The protein localises to the cytoplasm. Participates actively in the response to hyperosmotic and heat shock by preventing the aggregation of stress-denatured proteins and by disaggregating proteins, also in an autonomous, DnaK-independent fashion. Unfolded proteins bind initially to DnaJ; upon interaction with the DnaJ-bound protein, DnaK hydrolyzes its bound ATP, resulting in the formation of a stable complex. GrpE releases ADP from DnaK; ATP binding to DnaK triggers the release of the substrate protein, thus completing the reaction cycle. Several rounds of ATP-dependent interactions between DnaJ, DnaK and GrpE are required for fully efficient folding. Also involved, together with DnaK and GrpE, in the DNA replication of plasmids through activation of initiation proteins. The sequence is that of Chaperone protein DnaJ from Pseudomonas syringae pv. syringae (strain B728a).